Reading from the N-terminus, the 189-residue chain is uncharacterized protein (189 aa).

A run of 3 helical transmembrane segments spans residues 2-22, 93-113, and 116-136; these read LVVV…HHLL, ILFY…YFIL, and FYST…LHTL.

It localises to the membrane. This is an uncharacterized protein from Schizosaccharomyces pombe (strain 972 / ATCC 24843) (Fission yeast).